The primary structure comprises 393 residues: MSLPLTRKDLMIVNMGPQHPSMHGVLRLIVTLDGEDVIDCEPILGYLHRGMEKIAENRTIIQYLPYVTRWDYLATMFTEAITVNAPEFLENIQIPQRASYIRVIMLELSRIASHLLWLGPFMADLGAQTPFFYIFRERELIYDLFEAATGMRMMHNYFRIGGVAADLPYGWIDKCLDFCDYFLRGVIEYQQLITQNPIFLERVEGVGFISGEEAVNWGLSGPMLRASGIQWDLRKVDLYESYNQFDWKVQWQKEGDSLARYLVRIGEMRESIKIIQQAVEKIPGGPYENLEVRRFKKAKNSEWNDFEYRFLGKKPSPNFELSKQELYARVEAPKGELGIYLVGDDSLFPWRWKIRPPGFINLQILPQLVKKMKLADIMTILGSIDIIMGEVDR.

It belongs to the complex I 49 kDa subunit family. In terms of assembly, NDH is composed of at least 16 different subunits, 5 of which are encoded in the nucleus.

The protein resides in the plastid. It localises to the chloroplast thylakoid membrane. The enzyme catalyses a plastoquinone + NADH + (n+1) H(+)(in) = a plastoquinol + NAD(+) + n H(+)(out). The catalysed reaction is a plastoquinone + NADPH + (n+1) H(+)(in) = a plastoquinol + NADP(+) + n H(+)(out). In terms of biological role, NDH shuttles electrons from NAD(P)H:plastoquinone, via FMN and iron-sulfur (Fe-S) centers, to quinones in the photosynthetic chain and possibly in a chloroplast respiratory chain. The immediate electron acceptor for the enzyme in this species is believed to be plastoquinone. Couples the redox reaction to proton translocation, and thus conserves the redox energy in a proton gradient. The sequence is that of NAD(P)H-quinone oxidoreductase subunit H, chloroplastic from Oryza nivara (Indian wild rice).